The chain runs to 176 residues: Nuclear ribonuclease Z (176 aa).

This sequence belongs to the RNase Z family. In terms of assembly, homodimer. Zn(2+) is required as a cofactor.

It is found in the nucleus. The enzyme catalyses Endonucleolytic cleavage of RNA, removing extra 3' nucleotides from tRNA precursor, generating 3' termini of tRNAs. A 3'-hydroxy group is left at the tRNA terminus and a 5'-phosphoryl group is left at the trailer molecule.. Zinc phosphodiesterase, which displays some tRNA 3'-processing endonuclease activity. Probably involved in tRNA maturation, by removing a 3'-trailer from precursor tRNA. This Triticum aestivum (Wheat) protein is Nuclear ribonuclease Z (ELAC).